Here is a 31-residue protein sequence, read N- to C-terminus: Cyclotide Hyfl-A (31 aa).

The segment at residues 1-31 (SISCGESCVYIPCTVTALVGCTCKDKVCYLN) is a cross-link (cyclopeptide (Ser-Asn)). 3 cysteine pairs are disulfide-bonded: Cys4-Cys21, Cys8-Cys23, and Cys13-Cys28.

The protein belongs to the cyclotide family. Bracelet subfamily. Post-translationally, this is a cyclic peptide.

Its function is as follows. Probably participates in a plant defense mechanism. In Hybanthus floribundus (Greenviolet), this protein is Cyclotide Hyfl-A.